Here is a 309-residue protein sequence, read N- to C-terminus: NAD kinase (309 aa).

Catalysis depends on Asp-89, which acts as the Proton acceptor. NAD(+) contacts are provided by residues 89–90 (DG), 163–164 (NE), His-174, Arg-191, Asp-193, and 204–209 (TAYALS).

The protein belongs to the NAD kinase family. A divalent metal cation is required as a cofactor.

It is found in the cytoplasm. It carries out the reaction NAD(+) + ATP = ADP + NADP(+) + H(+). Its function is as follows. Involved in the regulation of the intracellular balance of NAD and NADP, and is a key enzyme in the biosynthesis of NADP. Catalyzes specifically the phosphorylation on 2'-hydroxyl of the adenosine moiety of NAD to yield NADP. The protein is NAD kinase of Shewanella sp. (strain W3-18-1).